The primary structure comprises 84 residues: U4-theraphotoxin-Hhn1n (84 aa).

The N-terminal stretch at 1 to 22 (MKVTLIAILTCAAVLVLHTTAA) is a signal peptide. A propeptide spanning residues 23 to 47 (EELEESQLMEVGMPDTELAAVDEER) is cleaved from the precursor. Cystine bridges form between C51/C65, C55/C76, and C70/C81.

This sequence belongs to the neurotoxin 12 (Hwtx-2) family. 02 (Hwtx-2) subfamily. Expressed by the venom gland.

It localises to the secreted. Postsynaptic neurotoxin. The protein is U4-theraphotoxin-Hhn1n of Cyriopagopus hainanus (Chinese bird spider).